The chain runs to 260 residues: MTAETKRVGATGGMENSFGFTQIDEAQKQSMVDGVFHSVAENYDRMNDILSLGLHRIWKNSMITWLAPPAISGWKVIDVAGGTGDIAFRILNASRKKAHATVLDINHSMLNVGKKRAQINGLAPFIDFVEANAEQLPFSDQSFDAYTIAFGIRNVPHIDKALSEAFRVLKPGGRFLCLEFSNVEMPLLDKLYDLWSFHAIPKLGQLIAGNSDAYRYLVESIRMFPKQDDFACMINRAGFSRVSYRNFTGAIAALHSGWKI.

S-adenosyl-L-methionine is bound by residues T83, D104, and 132–133 (NA).

Belongs to the class I-like SAM-binding methyltransferase superfamily. MenG/UbiE family.

It catalyses the reaction a 2-demethylmenaquinol + S-adenosyl-L-methionine = a menaquinol + S-adenosyl-L-homocysteine + H(+). It carries out the reaction a 2-methoxy-6-(all-trans-polyprenyl)benzene-1,4-diol + S-adenosyl-L-methionine = a 5-methoxy-2-methyl-3-(all-trans-polyprenyl)benzene-1,4-diol + S-adenosyl-L-homocysteine + H(+). The protein operates within quinol/quinone metabolism; menaquinone biosynthesis; menaquinol from 1,4-dihydroxy-2-naphthoate: step 2/2. Its pathway is cofactor biosynthesis; ubiquinone biosynthesis. Methyltransferase required for the conversion of demethylmenaquinol (DMKH2) to menaquinol (MKH2) and the conversion of 2-polyprenyl-6-methoxy-1,4-benzoquinol (DDMQH2) to 2-polyprenyl-3-methyl-6-methoxy-1,4-benzoquinol (DMQH2). This Bartonella bacilliformis (strain ATCC 35685 / KC583 / Herrer 020/F12,63) protein is Ubiquinone/menaquinone biosynthesis C-methyltransferase UbiE.